A 130-amino-acid chain; its full sequence is Small ribosomal subunit protein uS8 (130 aa).

It belongs to the universal ribosomal protein uS8 family. In terms of assembly, part of the 30S ribosomal subunit.

In terms of biological role, one of the primary rRNA binding proteins, it binds directly to 16S rRNA central domain where it helps coordinate assembly of the platform of the 30S subunit. This chain is Small ribosomal subunit protein uS8, found in Thermococcus sibiricus (strain DSM 12597 / MM 739).